Consider the following 236-residue polypeptide: Uridylate kinase (236 aa).

12–15 (KISG) contributes to the ATP binding site. The tract at residues 20-25 (GKKGFG) is involved in allosteric activation by GTP. UMP is bound at residue G54. 2 residues coordinate ATP: G55 and R59. Residues D72 and 133-140 (TGNPYFST) each bind UMP. ATP is bound by residues Y166 and D169.

The protein belongs to the UMP kinase family. Homohexamer.

It is found in the cytoplasm. The enzyme catalyses UMP + ATP = UDP + ADP. The protein operates within pyrimidine metabolism; CTP biosynthesis via de novo pathway; UDP from UMP (UMPK route): step 1/1. Its activity is regulated as follows. Allosterically activated by GTP. Inhibited by UTP. Its function is as follows. Catalyzes the reversible phosphorylation of UMP to UDP. This is Uridylate kinase from Clostridium novyi (strain NT).